The primary structure comprises 564 residues: Proline--tRNA ligase (564 aa).

Belongs to the class-II aminoacyl-tRNA synthetase family. ProS type 1 subfamily. Homodimer.

It localises to the cytoplasm. It carries out the reaction tRNA(Pro) + L-proline + ATP = L-prolyl-tRNA(Pro) + AMP + diphosphate. Its function is as follows. Catalyzes the attachment of proline to tRNA(Pro) in a two-step reaction: proline is first activated by ATP to form Pro-AMP and then transferred to the acceptor end of tRNA(Pro). As ProRS can inadvertently accommodate and process non-cognate amino acids such as alanine and cysteine, to avoid such errors it has two additional distinct editing activities against alanine. One activity is designated as 'pretransfer' editing and involves the tRNA(Pro)-independent hydrolysis of activated Ala-AMP. The other activity is designated 'posttransfer' editing and involves deacylation of mischarged Ala-tRNA(Pro). The misacylated Cys-tRNA(Pro) is not edited by ProRS. The chain is Proline--tRNA ligase from Sulfurihydrogenibium sp. (strain YO3AOP1).